A 555-amino-acid polypeptide reads, in one-letter code: Connector enhancer of kinase suppressor of ras 3 (555 aa).

One can recognise an SAM domain in the interval Trp7–Leu72. The CRIC domain maps to Asn80–Ala174. The PDZ domain occupies Glu211–Pro293. 3 disordered regions span residues Arg308 to Ser333, Pro348 to Glu391, and Pro518 to Gly538. Positions Pro311–Thr329 are enriched in low complexity. The region spanning Ser325–Trp546 is the DUF1170 domain. Phosphoserine occurs at positions 381 and 383.

The protein belongs to the CNKSR family. Interacts with epithelial sodium channel ENaC. Interacts directly with SCNN1A (ENaC subunit alpha) and SCNN1B (ENaC subunit beta) C-terminal tails. Interacts with ENaC regulatory proteins NEDD4L, RAF1 and SGK1.

The protein localises to the cytoplasm. It localises to the apical cell membrane. Functionally, involved in transepithelial sodium transport. Regulates aldosterone-induced and epithelial sodium channel (ENaC)-mediated sodium transport through regulation of ENaC cell surface expression. Acts as a scaffold protein coordinating the assembly of an ENaC-regulatory complex (ERC). The sequence is that of Connector enhancer of kinase suppressor of ras 3 (Cnksr3) from Rattus norvegicus (Rat).